We begin with the raw amino-acid sequence, 358 residues long: UPF0575 protein C19orf67 (358 aa).

The interval M1–L84 is disordered. 2 stretches are compositionally biased toward pro residues: residues E17–G32 and P70–P80.

The protein belongs to the UPF0575 family.

The protein is UPF0575 protein C19orf67 (C19orf67) of Homo sapiens (Human).